Reading from the N-terminus, the 719-residue chain is Polyribonucleotide nucleotidyltransferase (719 aa).

Mg(2+) is bound by residues D495 and D501. The 60-residue stretch at 562–621 (PRRLSFRIDPELIGTVIGPGGRTIKGITERTNTKIDIEDTGIVTVASHDGAAAEEAQKII) folds into the KH domain. Residues 631–699 (GEYFDGKVTR…NRGRINLTLR (69 aa)) enclose the S1 motif domain. Residues 699–719 (RGVPQDGSDPQPTVILPIGES) are disordered.

Belongs to the polyribonucleotide nucleotidyltransferase family. It depends on Mg(2+) as a cofactor.

It localises to the cytoplasm. It catalyses the reaction RNA(n+1) + phosphate = RNA(n) + a ribonucleoside 5'-diphosphate. Its function is as follows. Involved in mRNA degradation. Catalyzes the phosphorolysis of single-stranded polyribonucleotides processively in the 3'- to 5'-direction. This chain is Polyribonucleotide nucleotidyltransferase, found in Synechococcus sp. (strain RCC307).